Consider the following 82-residue polypeptide: Small ribosomal subunit protein bS16 (82 aa).

Belongs to the bacterial ribosomal protein bS16 family.

This Cyanothece sp. (strain PCC 7425 / ATCC 29141) protein is Small ribosomal subunit protein bS16.